The following is a 112-amino-acid chain: UPF0342 protein SSU05_1260 (112 aa).

It belongs to the UPF0342 family.

The protein is UPF0342 protein SSU05_1260 of Streptococcus suis (strain 05ZYH33).